The sequence spans 236 residues: Leucyl/phenylalanyl-tRNA--protein transferase (236 aa).

It belongs to the L/F-transferase family.

Its subcellular location is the cytoplasm. It catalyses the reaction N-terminal L-lysyl-[protein] + L-leucyl-tRNA(Leu) = N-terminal L-leucyl-L-lysyl-[protein] + tRNA(Leu) + H(+). The catalysed reaction is N-terminal L-arginyl-[protein] + L-leucyl-tRNA(Leu) = N-terminal L-leucyl-L-arginyl-[protein] + tRNA(Leu) + H(+). The enzyme catalyses L-phenylalanyl-tRNA(Phe) + an N-terminal L-alpha-aminoacyl-[protein] = an N-terminal L-phenylalanyl-L-alpha-aminoacyl-[protein] + tRNA(Phe). Functions in the N-end rule pathway of protein degradation where it conjugates Leu, Phe and, less efficiently, Met from aminoacyl-tRNAs to the N-termini of proteins containing an N-terminal arginine or lysine. This chain is Leucyl/phenylalanyl-tRNA--protein transferase, found in Vibrio atlanticus (strain LGP32) (Vibrio splendidus (strain Mel32)).